Here is a 292-residue protein sequence, read N- to C-terminus: ATP phosphoribosyltransferase (292 aa).

It belongs to the ATP phosphoribosyltransferase family. Long subfamily. Mg(2+) serves as cofactor.

The protein localises to the cytoplasm. It carries out the reaction 1-(5-phospho-beta-D-ribosyl)-ATP + diphosphate = 5-phospho-alpha-D-ribose 1-diphosphate + ATP. It functions in the pathway amino-acid biosynthesis; L-histidine biosynthesis; L-histidine from 5-phospho-alpha-D-ribose 1-diphosphate: step 1/9. With respect to regulation, feedback inhibited by histidine. Functionally, catalyzes the condensation of ATP and 5-phosphoribose 1-diphosphate to form N'-(5'-phosphoribosyl)-ATP (PR-ATP). Has a crucial role in the pathway because the rate of histidine biosynthesis seems to be controlled primarily by regulation of HisG enzymatic activity. In Thermodesulfovibrio yellowstonii (strain ATCC 51303 / DSM 11347 / YP87), this protein is ATP phosphoribosyltransferase.